The chain runs to 147 residues: MMFRTSLMRFAAAFFAIVFVVLVGVARSEECTRTCIAQNCDTLSIRYGKYCGIGHSGCPGEEPCDDLDACCKIHDHCVELNGMTNISCHKKFQRCVNRLSKAIKQSKNKKVGFSTKCPYSVVIPTVNQGMDIGILFSQLGNDMKTEL.

Residues 1-28 (MMFRTSLMRFAAAFFAIVFVVLVGVARS) form the signal peptide. 6 disulfides stabilise this stretch: Cys-31–Cys-58, Cys-35–Cys-64, Cys-40–Cys-117, Cys-51–Cys-71, Cys-70–Cys-95, and Cys-77–Cys-88. Positions 50, 52, and 55 each coordinate Ca(2+). The active site involves His-74. A Ca(2+)-binding site is contributed by Asp-75. A Prevents secretion from ER motif is present at residues 144–147 (KTEL).

The protein belongs to the phospholipase A2 family. Requires Ca(2+) as cofactor. In terms of tissue distribution, ubiquitous but expressed at a low level. Detected in vascular tissues and in the guard cells. Predominantly detected in pollen.

The protein resides in the secreted. It localises to the endoplasmic reticulum. It catalyses the reaction a 1,2-diacyl-sn-glycero-3-phosphocholine + H2O = a 1-acyl-sn-glycero-3-phosphocholine + a fatty acid + H(+). With respect to regulation, inhibited by aristolochic acid. Its function is as follows. PA2 catalyzes the calcium-dependent hydrolysis of the 2-acyl groups in 3-sn-phosphoglycerides. Releases lysophospholipids (LPLs) and free fatty acids (FFAs) from membrane phospholipids in response to hormones and other external stimuli. Regulates the process of cell elongation and plays important roles in shoot gravitropism by mediating auxin-induced cell elongation. Involved in stomatal opening in response to light. Plays a role in pollen development and germination and tube growth. In Arabidopsis thaliana (Mouse-ear cress), this protein is Phospholipase A2-beta (PLA2-BETA).